Reading from the N-terminus, the 237-residue chain is Ribosomal RNA small subunit methyltransferase G (237 aa).

S-adenosyl-L-methionine contacts are provided by residues G78, F83, 129 to 130 (AE), and R148. A disordered region spans residues 218-237 (KKETPNKYPRKAGMPNKRPL).

The protein belongs to the methyltransferase superfamily. RNA methyltransferase RsmG family.

It localises to the cytoplasm. In terms of biological role, specifically methylates the N7 position of a guanine in 16S rRNA. The polypeptide is Ribosomal RNA small subunit methyltransferase G (Streptococcus gordonii (strain Challis / ATCC 35105 / BCRC 15272 / CH1 / DL1 / V288)).